A 412-amino-acid chain; its full sequence is Phosphoglycerate kinase (412 aa).

Substrate-binding positions include 26–28 (DFN), R42, 65–68 (HLGR), R133, and R166. ATP is bound by residues K217, G308, E339, and 368-371 (GGDS).

The protein belongs to the phosphoglycerate kinase family. Monomer.

It localises to the cytoplasm. The catalysed reaction is (2R)-3-phosphoglycerate + ATP = (2R)-3-phospho-glyceroyl phosphate + ADP. The protein operates within carbohydrate degradation; glycolysis; pyruvate from D-glyceraldehyde 3-phosphate: step 2/5. The polypeptide is Phosphoglycerate kinase (Synechococcus sp. (strain JA-2-3B'a(2-13)) (Cyanobacteria bacterium Yellowstone B-Prime)).